A 218-amino-acid polypeptide reads, in one-letter code: Eukaryotic translation initiation factor 3 subunit K (218 aa).

Ala-2 carries the post-translational modification N-acetylalanine. At Thr-28 the chain carries Phosphothreonine. The PCI domain occupies 42 to 204 (YDLEANLAVL…SIKPKNIVEK (163 aa)). Phosphoserine is present on Ser-217.

In terms of assembly, component of the eukaryotic translation initiation factor 3 (eIF-3) complex, which is composed of 13 subunits: EIF3A, EIF3B, EIF3C, EIF3D, EIF3E, EIF3F, EIF3G, EIF3H, EIF3I, EIF3J, EIF3K, EIF3L and EIF3M. The eIF-3 complex appears to include 3 stable modules: module A is composed of EIF3A, EIF3B, EIF3G and EIF3I; module B is composed of EIF3F, EIF3H, and EIF3M; and module C is composed of EIF3C, EIF3D, EIF3E, EIF3K and EIF3L. EIF3C of module C binds EIF3B of module A and EIF3H of module B, thereby linking the three modules. EIF3J is a labile subunit that binds to the eIF-3 complex via EIF3B. The eIF-3 complex interacts with RPS6KB1 under conditions of nutrient depletion. Mitogenic stimulation leads to binding and activation of a complex composed of MTOR and RPTOR, leading to phosphorylation and release of RPS6KB1 and binding of EIF4B to eIF-3. Interacts with CCND3, but not with CCND1 and CCND2. Ubiquitous, with the highest levels of expression in brain, testis and kidney.

The protein localises to the nucleus. It localises to the cytoplasm. In terms of biological role, component of the eukaryotic translation initiation factor 3 (eIF-3) complex, which is required for several steps in the initiation of protein synthesis. The eIF-3 complex associates with the 40S ribosome and facilitates the recruitment of eIF-1, eIF-1A, eIF-2:GTP:methionyl-tRNAi and eIF-5 to form the 43S pre-initiation complex (43S PIC). The eIF-3 complex stimulates mRNA recruitment to the 43S PIC and scanning of the mRNA for AUG recognition. The eIF-3 complex is also required for disassembly and recycling of post-termination ribosomal complexes and subsequently prevents premature joining of the 40S and 60S ribosomal subunits prior to initiation. The eIF-3 complex specifically targets and initiates translation of a subset of mRNAs involved in cell proliferation, including cell cycling, differentiation and apoptosis, and uses different modes of RNA stem-loop binding to exert either translational activation or repression. In Homo sapiens (Human), this protein is Eukaryotic translation initiation factor 3 subunit K.